A 339-amino-acid chain; its full sequence is Anthranilate phosphoribosyltransferase (339 aa).

Residues G80, 83 to 84 (GD), T88, 90 to 93 (NIST), 108 to 116 (KHGNRSVSS), and S120 contribute to the 5-phospho-alpha-D-ribose 1-diphosphate site. Residue G80 participates in anthranilate binding. S92 lines the Mg(2+) pocket. Residue N111 participates in anthranilate binding. R166 is a binding site for anthranilate. Mg(2+) is bound by residues D225 and E226.

It belongs to the anthranilate phosphoribosyltransferase family. As to quaternary structure, homodimer. Mg(2+) is required as a cofactor.

It catalyses the reaction N-(5-phospho-beta-D-ribosyl)anthranilate + diphosphate = 5-phospho-alpha-D-ribose 1-diphosphate + anthranilate. The protein operates within amino-acid biosynthesis; L-tryptophan biosynthesis; L-tryptophan from chorismate: step 2/5. Its function is as follows. Catalyzes the transfer of the phosphoribosyl group of 5-phosphorylribose-1-pyrophosphate (PRPP) to anthranilate to yield N-(5'-phosphoribosyl)-anthranilate (PRA). This Moorella thermoacetica (strain ATCC 39073 / JCM 9320) protein is Anthranilate phosphoribosyltransferase.